Reading from the N-terminus, the 152-residue chain is Ribosome maturation factor RimP (152 aa).

It belongs to the RimP family.

The protein resides in the cytoplasm. In terms of biological role, required for maturation of 30S ribosomal subunits. The protein is Ribosome maturation factor RimP of Erwinia tasmaniensis (strain DSM 17950 / CFBP 7177 / CIP 109463 / NCPPB 4357 / Et1/99).